Here is an 88-residue protein sequence, read N- to C-terminus: UPF0297 protein SAK_2030 (88 aa).

It belongs to the UPF0297 family.

The chain is UPF0297 protein SAK_2030 from Streptococcus agalactiae serotype Ia (strain ATCC 27591 / A909 / CDC SS700).